The following is a 327-amino-acid chain: tRNA N6-adenosine threonylcarbamoyltransferase (327 aa).

Residues histidine 109 and histidine 113 each coordinate Fe cation. Residues 132–136 (MVSGG), aspartate 165, glycine 178, aspartate 182, and asparagine 268 each bind substrate. Aspartate 296 contacts Fe cation.

It belongs to the KAE1 / TsaD family. The cofactor is Fe(2+).

The protein resides in the cytoplasm. It catalyses the reaction L-threonylcarbamoyladenylate + adenosine(37) in tRNA = N(6)-L-threonylcarbamoyladenosine(37) in tRNA + AMP + H(+). Functionally, required for the formation of a threonylcarbamoyl group on adenosine at position 37 (t(6)A37) in tRNAs that read codons beginning with adenine. Is involved in the transfer of the threonylcarbamoyl moiety of threonylcarbamoyl-AMP (TC-AMP) to the N6 group of A37, together with TsaE and TsaB. TsaD likely plays a direct catalytic role in this reaction. This chain is tRNA N6-adenosine threonylcarbamoyltransferase, found in Thermotoga petrophila (strain ATCC BAA-488 / DSM 13995 / JCM 10881 / RKU-1).